A 239-amino-acid polypeptide reads, in one-letter code: Ribonuclease 3 (239 aa).

Positions 12–137 (ISRLEALIGY…LIATLYLDGG (126 aa)) constitute an RNase III domain. Residue glutamate 50 coordinates Mg(2+). Residue aspartate 54 is part of the active site. Mg(2+) is bound by residues aspartate 123 and glutamate 126. Glutamate 126 is a catalytic residue. The region spanning 162 to 231 (DAKTELQEWA…ATRLLEREGV (70 aa)) is the DRBM domain.

This sequence belongs to the ribonuclease III family. As to quaternary structure, homodimer. It depends on Mg(2+) as a cofactor.

The protein resides in the cytoplasm. The enzyme catalyses Endonucleolytic cleavage to 5'-phosphomonoester.. Digests double-stranded RNA. Involved in the processing of primary rRNA transcript to yield the immediate precursors to the large and small rRNAs (23S and 16S). Processes some mRNAs, and tRNAs when they are encoded in the rRNA operon. Processes pre-crRNA and tracrRNA of type II CRISPR loci if present in the organism. This is Ribonuclease 3 from Agrobacterium fabrum (strain C58 / ATCC 33970) (Agrobacterium tumefaciens (strain C58)).